The following is a 360-amino-acid chain: Phospho-N-acetylmuramoyl-pentapeptide-transferase (360 aa).

The next 10 helical transmembrane spans lie at Arg25 to Ile45, Thr73 to Leu93, Tyr97 to Tyr117, Trp132 to Ala152, Val168 to Ser188, Gly199 to Ser219, Ala236 to Phe256, Val263 to Ile283, Ile288 to Val308, and Val338 to Lys358.

Belongs to the glycosyltransferase 4 family. MraY subfamily. Requires Mg(2+) as cofactor.

The protein resides in the cell inner membrane. The catalysed reaction is UDP-N-acetyl-alpha-D-muramoyl-L-alanyl-gamma-D-glutamyl-meso-2,6-diaminopimeloyl-D-alanyl-D-alanine + di-trans,octa-cis-undecaprenyl phosphate = di-trans,octa-cis-undecaprenyl diphospho-N-acetyl-alpha-D-muramoyl-L-alanyl-D-glutamyl-meso-2,6-diaminopimeloyl-D-alanyl-D-alanine + UMP. It participates in cell wall biogenesis; peptidoglycan biosynthesis. Its function is as follows. Catalyzes the initial step of the lipid cycle reactions in the biosynthesis of the cell wall peptidoglycan: transfers peptidoglycan precursor phospho-MurNAc-pentapeptide from UDP-MurNAc-pentapeptide onto the lipid carrier undecaprenyl phosphate, yielding undecaprenyl-pyrophosphoryl-MurNAc-pentapeptide, known as lipid I. This chain is Phospho-N-acetylmuramoyl-pentapeptide-transferase, found in Pseudomonas fluorescens (strain ATCC BAA-477 / NRRL B-23932 / Pf-5).